The following is a 588-amino-acid chain: Aspartate--tRNA ligase (588 aa).

An L-aspartate-binding site is contributed by Glu171. Residues 195-198 are aspartate; it reads QLFK. Residue Arg217 coordinates L-aspartate. ATP-binding positions include 217 to 219 and Gln226; that span reads RDE. His447 serves as a coordination point for L-aspartate. Position 481 (Glu481) interacts with ATP. L-aspartate is bound at residue Arg488. 533–536 provides a ligand contact to ATP; it reads GLDR.

This sequence belongs to the class-II aminoacyl-tRNA synthetase family. Type 1 subfamily. In terms of assembly, homodimer.

It is found in the cytoplasm. The enzyme catalyses tRNA(Asp) + L-aspartate + ATP = L-aspartyl-tRNA(Asp) + AMP + diphosphate. Catalyzes the attachment of L-aspartate to tRNA(Asp) in a two-step reaction: L-aspartate is first activated by ATP to form Asp-AMP and then transferred to the acceptor end of tRNA(Asp). This Aeromonas salmonicida (strain A449) protein is Aspartate--tRNA ligase.